The chain runs to 198 residues: Nucleoside triphosphate pyrophosphatase (198 aa).

Catalysis depends on Asp72, which acts as the Proton acceptor.

This sequence belongs to the Maf family. A divalent metal cation is required as a cofactor.

Its subcellular location is the cytoplasm. The enzyme catalyses a ribonucleoside 5'-triphosphate + H2O = a ribonucleoside 5'-phosphate + diphosphate + H(+). It carries out the reaction a 2'-deoxyribonucleoside 5'-triphosphate + H2O = a 2'-deoxyribonucleoside 5'-phosphate + diphosphate + H(+). In terms of biological role, nucleoside triphosphate pyrophosphatase. May have a dual role in cell division arrest and in preventing the incorporation of modified nucleotides into cellular nucleic acids. The protein is Nucleoside triphosphate pyrophosphatase of Corynebacterium aurimucosum (strain ATCC 700975 / DSM 44827 / CIP 107346 / CN-1) (Corynebacterium nigricans).